The primary structure comprises 183 residues: Proton-transporting V-type ATPase complex assembly regulator TMEM9 (183 aa).

The signal sequence occupies residues 1-20 (MKLLSLVAVVGCLLVPPAEA). Asn21, Asn38, and Asn47 each carry an N-linked (GlcNAc...) asparagine glycan. The Extracellular portion of the chain corresponds to 21–89 (NKSSEDIRCK…YEERSTTTIK (69 aa)). The helical transmembrane segment at 90–110 (VIIVIYLSVVGALLLYMAFLM) threads the bilayer. The Cytoplasmic segment spans residues 111 to 183 (LVDPLIRKPD…TVFDRHKMLS (73 aa)). 2 positions are modified to phosphoserine: Ser137 and Ser144.

It belongs to the TMEM9 family. In terms of assembly, interacts with the v-ATPase accessory protein ATP6AP2 and with the v-ATPase complex subunit ATP6V0D1; these interactions lead to the assembly of the v-ATPase complex. In terms of processing, N-glycosylated. Highly expressed in adrenal gland, thyroid gland, testis, ovary and prostate. Moderate expression in trachea, spinal cord, stomach, colon, small intestine and spleen. Low expression in bone marrow, lymph node, thymus and peripheral blood lymphocytes. Expression is detected in hematopoietic cell lines including those of myeloid, erythroid, B- and T-cell origin.

Its subcellular location is the lysosome membrane. It localises to the late endosome membrane. The protein resides in the endosome. It is found in the multivesicular body membrane. In terms of biological role, transmembrane protein that binds to and facilitates the assembly of lysosomal proton-transporting V-type ATPase (v-ATPase), resulting in enhanced lysosomal acidification and trafficking. By bringing the v-ATPase accessory protein ATP6AP2 and the v-ATPase subunit ATP6V0D1 together, allows v-ATPase complex formation and activation. TMEM9-controlled vesicular acidification induces hyperactivation of Wnt/beta-catenin signaling, involved in development, tissue homeostasis and tissue regeneration, through lysosomal degradation of adenomatous polyposis coli/APC. In the liver, involved in hepatic regeneration. The polypeptide is Proton-transporting V-type ATPase complex assembly regulator TMEM9 (Homo sapiens (Human)).